The chain runs to 382 residues: Na(+)/H(+) antiporter NhaA (382 aa).

The next 10 membrane-spanning stretches (helical) occupy residues Phe-11–Ala-31, Phe-47–Ile-67, Leu-88–Ile-108, Gly-116–Phe-136, Phe-145–Tyr-165, His-170–Leu-190, Ile-261–Gly-283, Leu-299–Val-319, Thr-327–Val-347, and Gly-353–Gly-373.

It belongs to the NhaA Na(+)/H(+) (TC 2.A.33) antiporter family.

It is found in the cell inner membrane. The enzyme catalyses Na(+)(in) + 2 H(+)(out) = Na(+)(out) + 2 H(+)(in). Na(+)/H(+) antiporter that extrudes sodium in exchange for external protons. This chain is Na(+)/H(+) antiporter NhaA, found in Geobacter sulfurreducens (strain ATCC 51573 / DSM 12127 / PCA).